We begin with the raw amino-acid sequence, 172 residues long: Female-specific lacrimal gland protein (172 aa).

The first 16 residues, 1-16 (MVKFLLLALALGVSCA), serve as a signal peptide directing secretion. 2 cysteine pairs are disulfide-bonded: Cys-60–Cys-64 and Cys-79–Cys-170.

It belongs to the calycin superfamily. Lipocalin family. As to expression, expressed in the lacrimal gland from where it is secreted into tears (at protein level).

The protein localises to the secreted. The polypeptide is Female-specific lacrimal gland protein (Mesocricetus auratus (Golden hamster)).